The sequence spans 105 residues: ATP synthase subunit c (105 aa).

3 helical membrane passes run 3–23 (FLSL…GGMG), 32–52 (SILG…IGMG), and 78–98 (VAMA…IIAI).

This sequence belongs to the ATPase C chain family. F-type ATPases have 2 components, F(1) - the catalytic core - and F(0) - the membrane proton channel. F(1) has five subunits: alpha(3), beta(3), gamma(1), delta(1), epsilon(1). F(0) has three main subunits: a(1), b(2) and c(10-14). The alpha and beta chains form an alternating ring which encloses part of the gamma chain. F(1) is attached to F(0) by a central stalk formed by the gamma and epsilon chains, while a peripheral stalk is formed by the delta and b chains.

The protein localises to the cell inner membrane. F(1)F(0) ATP synthase produces ATP from ADP in the presence of a proton or sodium gradient. F-type ATPases consist of two structural domains, F(1) containing the extramembraneous catalytic core and F(0) containing the membrane proton channel, linked together by a central stalk and a peripheral stalk. During catalysis, ATP synthesis in the catalytic domain of F(1) is coupled via a rotary mechanism of the central stalk subunits to proton translocation. Functionally, key component of the F(0) channel; it plays a direct role in translocation across the membrane. A homomeric c-ring of between 10-14 subunits forms the central stalk rotor element with the F(1) delta and epsilon subunits. This chain is ATP synthase subunit c, found in Helicobacter pylori (strain Shi470).